Reading from the N-terminus, the 456-residue chain is Cobyrinate a,c-diamide synthase (456 aa).

In terms of domain architecture, GATase cobBQ-type spans 247–439 (PIAIARDRAF…LHLHFGGKPW (193 aa)). Residue cysteine 330 is the Nucleophile of the active site.

It belongs to the CobB/CbiA family. Mg(2+) is required as a cofactor.

The catalysed reaction is cob(II)yrinate + 2 L-glutamine + 2 ATP + 2 H2O = cob(II)yrinate a,c diamide + 2 L-glutamate + 2 ADP + 2 phosphate + 2 H(+). It functions in the pathway cofactor biosynthesis; adenosylcobalamin biosynthesis; cob(II)yrinate a,c-diamide from sirohydrochlorin (anaerobic route): step 10/10. Its function is as follows. Catalyzes the ATP-dependent amidation of the two carboxylate groups at positions a and c of cobyrinate, using either L-glutamine or ammonia as the nitrogen source. The chain is Cobyrinate a,c-diamide synthase from Synechococcus sp. (strain ATCC 27144 / PCC 6301 / SAUG 1402/1) (Anacystis nidulans).